Reading from the N-terminus, the 250-residue chain is Pyridoxine 5'-phosphate synthase (250 aa).

A 3-amino-2-oxopropyl phosphate-binding site is contributed by Asn-11. Position 13–14 (13–14) interacts with 1-deoxy-D-xylulose 5-phosphate; it reads DH. Arg-22 contributes to the 3-amino-2-oxopropyl phosphate binding site. His-47 functions as the Proton acceptor in the catalytic mechanism. 1-deoxy-D-xylulose 5-phosphate contacts are provided by Arg-49 and His-54. Glu-74 (proton acceptor) is an active-site residue. Thr-104 serves as a coordination point for 1-deoxy-D-xylulose 5-phosphate. His-198 functions as the Proton donor in the catalytic mechanism. Residues Gly-199 and 220-221 contribute to the 3-amino-2-oxopropyl phosphate site; that span reads GY.

The protein belongs to the PNP synthase family. In terms of assembly, homooctamer; tetramer of dimers.

It localises to the cytoplasm. The enzyme catalyses 3-amino-2-oxopropyl phosphate + 1-deoxy-D-xylulose 5-phosphate = pyridoxine 5'-phosphate + phosphate + 2 H2O + H(+). Its pathway is cofactor biosynthesis; pyridoxine 5'-phosphate biosynthesis; pyridoxine 5'-phosphate from D-erythrose 4-phosphate: step 5/5. Its function is as follows. Catalyzes the complicated ring closure reaction between the two acyclic compounds 1-deoxy-D-xylulose-5-phosphate (DXP) and 3-amino-2-oxopropyl phosphate (1-amino-acetone-3-phosphate or AAP) to form pyridoxine 5'-phosphate (PNP) and inorganic phosphate. The protein is Pyridoxine 5'-phosphate synthase of Bradyrhizobium diazoefficiens (strain JCM 10833 / BCRC 13528 / IAM 13628 / NBRC 14792 / USDA 110).